We begin with the raw amino-acid sequence, 147 residues long: MAIRNLRFNDDEILRKKCRVVDDINDRIKVLVEDMIETMYENNGVGLASPQVGILKRIFVVDAMDGAGSRVFINPEILEKSGEQTDEEGCLSLPGRHKPVKRANKIKIKALDVNGNEFVLDAEGFLARAIQHEYDHLEGVLFIDHEL.

Positions 90 and 132 each coordinate Fe cation. Glu-133 is a catalytic residue. Residue His-136 coordinates Fe cation.

This sequence belongs to the polypeptide deformylase family. Fe(2+) serves as cofactor.

It catalyses the reaction N-terminal N-formyl-L-methionyl-[peptide] + H2O = N-terminal L-methionyl-[peptide] + formate. Removes the formyl group from the N-terminal Met of newly synthesized proteins. Requires at least a dipeptide for an efficient rate of reaction. N-terminal L-methionine is a prerequisite for activity but the enzyme has broad specificity at other positions. In Clostridium perfringens (strain 13 / Type A), this protein is Peptide deformylase 1.